Here is a 486-residue protein sequence, read N- to C-terminus: Protein ZINC INDUCED FACILITATOR 1 (486 aa).

The next 12 membrane-spanning stretches (helical) occupy residues 41 to 61 (FVWIIVLSTSLPISSLYPFLY), 82 to 102 (FVGCSFMLGRALTSVFWGIVA), 109 to 129 (PIILLGTISIAIFNALFGLSS), 131 to 151 (FWMAIGTRFLLGSFNCLLGTM), 170 to 190 (AVSTAWGIGLIIGPALGGFLA), 212 to 232 (ALPCFTISAFALLVTVLCCFI), 288 to 308 (IIVYCVLCLHDTAYSEIFALW), 327 to 347 (TVLAISGLGLFSFQVFVYPLA), 362 to 384 (ALMIPIQMSYPFIAGLSGLSLSL), 391 to 408 (ILINVLSVSAITGLLILQ), 423 to 443 (IAMTAMSLFKTVGPAGAGILF), and 461 to 481 (VFFVLNVIVVVGVALTFKPFL).

Belongs to the major facilitator superfamily. Strongly expressed in developing leaves, differentiating zones of root tips and sepals of developing flowers. Restricted to vascular tissues in older leaves, mature roots, flowers, anthers and filaments. Not expressed in developing anthers.

It is found in the vacuole membrane. Functionally, major facilitator superfamily (MFS) transporter involved in zinc tolerance by participating in vacuolar sequestration of zinc. In Arabidopsis thaliana (Mouse-ear cress), this protein is Protein ZINC INDUCED FACILITATOR 1 (ZIF1).